Here is a 253-residue protein sequence, read N- to C-terminus: Probable transcriptional regulatory protein RPR_05505 (253 aa).

It belongs to the TACO1 family.

Its subcellular location is the cytoplasm. The protein is Probable transcriptional regulatory protein RPR_05505 of Rickettsia peacockii (strain Rustic).